Consider the following 199-residue polypeptide: Protein GrpE (199 aa).

Positions 1-27 are disordered; it reads MSEQNTNHESPEQNVAHDNIEHSDSIL. A compositionally biased stretch (basic and acidic residues) spans 18 to 27; that stretch reads DNIEHSDSIL.

The protein belongs to the GrpE family. In terms of assembly, homodimer.

Its subcellular location is the cytoplasm. In terms of biological role, participates actively in the response to hyperosmotic and heat shock by preventing the aggregation of stress-denatured proteins, in association with DnaK and GrpE. It is the nucleotide exchange factor for DnaK and may function as a thermosensor. Unfolded proteins bind initially to DnaJ; upon interaction with the DnaJ-bound protein, DnaK hydrolyzes its bound ATP, resulting in the formation of a stable complex. GrpE releases ADP from DnaK; ATP binding to DnaK triggers the release of the substrate protein, thus completing the reaction cycle. Several rounds of ATP-dependent interactions between DnaJ, DnaK and GrpE are required for fully efficient folding. This chain is Protein GrpE, found in Psychrobacter sp. (strain St1).